The following is a 282-amino-acid chain: Lipoyl synthase (282 aa).

[4Fe-4S] cluster is bound by residues Cys37, Cys42, Cys48, Cys63, Cys67, Cys70, and Ser275. Residues 49-264 (WSRGTATFMI…RLVGIEKGFR (216 aa)) enclose the Radical SAM core domain.

It belongs to the radical SAM superfamily. Lipoyl synthase family. The cofactor is [4Fe-4S] cluster.

Its subcellular location is the cytoplasm. It catalyses the reaction [[Fe-S] cluster scaffold protein carrying a second [4Fe-4S](2+) cluster] + N(6)-octanoyl-L-lysyl-[protein] + 2 oxidized [2Fe-2S]-[ferredoxin] + 2 S-adenosyl-L-methionine + 4 H(+) = [[Fe-S] cluster scaffold protein] + N(6)-[(R)-dihydrolipoyl]-L-lysyl-[protein] + 4 Fe(3+) + 2 hydrogen sulfide + 2 5'-deoxyadenosine + 2 L-methionine + 2 reduced [2Fe-2S]-[ferredoxin]. It participates in protein modification; protein lipoylation via endogenous pathway; protein N(6)-(lipoyl)lysine from octanoyl-[acyl-carrier-protein]: step 2/2. Its function is as follows. Catalyzes the radical-mediated insertion of two sulfur atoms into the C-6 and C-8 positions of the octanoyl moiety bound to the lipoyl domains of lipoate-dependent enzymes, thereby converting the octanoylated domains into lipoylated derivatives. The polypeptide is Lipoyl synthase (Porphyromonas gingivalis (strain ATCC 33277 / DSM 20709 / CIP 103683 / JCM 12257 / NCTC 11834 / 2561)).